Reading from the N-terminus, the 342-residue chain is Cyclin pch1 (342 aa).

Positions 261–342 (LPIDQKNGSH…TDKEMETEAS (82 aa)) are disordered. A compositionally biased stretch (polar residues) spans 278-314 (TPSSLASVSTQATPQHQNSSGRTDSFHSLNTETPSKS). T300 carries the phosphothreonine modification. At S302 the chain carries Phosphoserine. Over residues 329–342 (KSSDTDKEMETEAS) the composition is skewed to basic and acidic residues.

The protein belongs to the cyclin family. Cyclin C subfamily. As to quaternary structure, interacts with cdc2 protein kinase and with the N-terminal domain of cdk9.

The protein localises to the nucleus. Functionally, essential for progression through the whole cell cycle. The protein is Cyclin pch1 (pch1) of Schizosaccharomyces pombe (strain 972 / ATCC 24843) (Fission yeast).